Reading from the N-terminus, the 230-residue chain is MILTMKLVHPLHHSLSSSIPFPSRKRQSKPYRCSLPSPGCEKVIRTETVLPPAPVSCEGRRVLLGCLLATASGILSTGSAEAVSTSRRALRASKLPESDFTTLPNGLKYYDIKVGNGAEAVKGSRVAVHYVAKWKGITFMTSRQGLGVGGGTPYGFDVGQSERGNVLKGLDLGVEGMRVGGQRLVIVPPELAYGKKGVQEIPPNATIELDIELLSIKQSPFGTPVKIVEG.

The transit peptide at 1 to 56 (MILTMKLVHPLHHSLSSSIPFPSRKRQSKPYRCSLPSPGCEKVIRTETVLPPAPVS) directs the protein to the chloroplast. The region spanning 123-217 (GSRVAVHYVA…ELDIELLSIK (95 aa)) is the PPIase FKBP-type domain.

Belongs to the FKBP-type PPIase family.

The protein localises to the plastid. The protein resides in the chloroplast thylakoid lumen. It carries out the reaction [protein]-peptidylproline (omega=180) = [protein]-peptidylproline (omega=0). Functionally, PPIases accelerate the folding of proteins. It catalyzes the cis-trans isomerization of proline imidic peptide bonds in oligopeptides. The chain is Peptidyl-prolyl cis-trans isomerase FKBP16-4, chloroplastic (FKBP16-4) from Arabidopsis thaliana (Mouse-ear cress).